The chain runs to 129 residues: Small ribosomal subunit protein uS11 (129 aa).

The protein belongs to the universal ribosomal protein uS11 family. As to quaternary structure, part of the 30S ribosomal subunit. Interacts with proteins S7 and S18. Binds to IF-3.

Its function is as follows. Located on the platform of the 30S subunit, it bridges several disparate RNA helices of the 16S rRNA. Forms part of the Shine-Dalgarno cleft in the 70S ribosome. The sequence is that of Small ribosomal subunit protein uS11 from Maricaulis maris (strain MCS10) (Caulobacter maris).